The chain runs to 495 residues: Aspartyl/glutamyl-tRNA(Asn/Gln) amidotransferase subunit B (495 aa).

The protein belongs to the GatB/GatE family. GatB subfamily. As to quaternary structure, heterotrimer of A, B and C subunits.

It carries out the reaction L-glutamyl-tRNA(Gln) + L-glutamine + ATP + H2O = L-glutaminyl-tRNA(Gln) + L-glutamate + ADP + phosphate + H(+). The enzyme catalyses L-aspartyl-tRNA(Asn) + L-glutamine + ATP + H2O = L-asparaginyl-tRNA(Asn) + L-glutamate + ADP + phosphate + 2 H(+). In terms of biological role, allows the formation of correctly charged Asn-tRNA(Asn) or Gln-tRNA(Gln) through the transamidation of misacylated Asp-tRNA(Asn) or Glu-tRNA(Gln) in organisms which lack either or both of asparaginyl-tRNA or glutaminyl-tRNA synthetases. The reaction takes place in the presence of glutamine and ATP through an activated phospho-Asp-tRNA(Asn) or phospho-Glu-tRNA(Gln). The sequence is that of Aspartyl/glutamyl-tRNA(Asn/Gln) amidotransferase subunit B from Acinetobacter baylyi (strain ATCC 33305 / BD413 / ADP1).